The chain runs to 242 residues: DNA repair protein RecO (242 aa).

The protein belongs to the RecO family. As to quaternary structure, monomer.

In terms of biological role, involved in DNA repair and RecF pathway recombination. This Shigella dysenteriae serotype 1 (strain Sd197) protein is DNA repair protein RecO.